The following is a 340-amino-acid chain: Sesquiterpene synthase 6 (340 aa).

Mg(2+) contacts are provided by Asp90, Asn229, Ser233, and Glu237. Positions 90–94 (DDITD) match the DDXXD motif motif. Positions 229 to 237 (NDIYSFNNE) match the NSE/DTE motif motif. Positions 316 and 317 each coordinate (2E,6E)-farnesyl diphosphate.

It belongs to the terpene synthase family. Mg(2+) serves as cofactor.

The catalysed reaction is (2E,6E)-farnesyl diphosphate = delta-cadinene + diphosphate. It carries out the reaction (2E,6E)-farnesyl diphosphate = bicyclogermacrene + diphosphate. Its function is as follows. Terpene cyclase that catalyzes the cyclization of farnesyl diphosphate (FPP) to various sesquiterpenes, including bicycloelemene, alpha-gurjunene, 9-epi-caryophylene, bicyclosesquiphellandrene, bicyclogermacrene and delta-cadinene. The polypeptide is Sesquiterpene synthase 6 (Postia placenta (strain ATCC 44394 / Madison 698-R) (Brown rot fungus)).